The primary structure comprises 95 residues: Aspartyl/glutamyl-tRNA(Asn/Gln) amidotransferase subunit C (95 aa).

It belongs to the GatC family. As to quaternary structure, heterotrimer of A, B and C subunits.

It catalyses the reaction L-glutamyl-tRNA(Gln) + L-glutamine + ATP + H2O = L-glutaminyl-tRNA(Gln) + L-glutamate + ADP + phosphate + H(+). It carries out the reaction L-aspartyl-tRNA(Asn) + L-glutamine + ATP + H2O = L-asparaginyl-tRNA(Asn) + L-glutamate + ADP + phosphate + 2 H(+). Functionally, allows the formation of correctly charged Asn-tRNA(Asn) or Gln-tRNA(Gln) through the transamidation of misacylated Asp-tRNA(Asn) or Glu-tRNA(Gln) in organisms which lack either or both of asparaginyl-tRNA or glutaminyl-tRNA synthetases. The reaction takes place in the presence of glutamine and ATP through an activated phospho-Asp-tRNA(Asn) or phospho-Glu-tRNA(Gln). This chain is Aspartyl/glutamyl-tRNA(Asn/Gln) amidotransferase subunit C, found in Roseobacter denitrificans (strain ATCC 33942 / OCh 114) (Erythrobacter sp. (strain OCh 114)).